The chain runs to 320 residues: Malate dehydrogenase (320 aa).

Residues 10–15 (GAGQIG) and Asp34 each bind NAD(+). Substrate contacts are provided by Arg83 and Arg89. NAD(+) is bound by residues Asn96 and 119 to 121 (ITN). Substrate-binding residues include Asn121 and Arg152. His176 acts as the Proton acceptor in catalysis.

Belongs to the LDH/MDH superfamily. MDH type 3 family.

It catalyses the reaction (S)-malate + NAD(+) = oxaloacetate + NADH + H(+). Catalyzes the reversible oxidation of malate to oxaloacetate. The polypeptide is Malate dehydrogenase (Methylobacterium nodulans (strain LMG 21967 / CNCM I-2342 / ORS 2060)).